Consider the following 205-residue polypeptide: GTP cyclohydrolase 1 (205 aa).

Zn(2+) contacts are provided by cysteine 95, histidine 98, and cysteine 166.

The protein belongs to the GTP cyclohydrolase I family. In terms of assembly, toroid-shaped homodecamer, composed of two pentamers of five dimers.

The enzyme catalyses GTP + H2O = 7,8-dihydroneopterin 3'-triphosphate + formate + H(+). It participates in cofactor biosynthesis; 7,8-dihydroneopterin triphosphate biosynthesis; 7,8-dihydroneopterin triphosphate from GTP: step 1/1. The chain is GTP cyclohydrolase 1 from Maricaulis maris (strain MCS10) (Caulobacter maris).